The chain runs to 456 residues: Dolichyl-diphosphooligosaccharide--protein glycosyltransferase 48 kDa subunit (456 aa).

Residues 1–42 (MGYFRCARAGSFGRRRKMEPSTAARAWALFWLLLPLLGAVCA) form the signal peptide. At 43–427 (SGPRTLVLLD…YERFIPSAYP (385 aa)) the chain is on the lumenal side. Residues 428 to 447 (YYASAFSMMLGLFIFSIVFL) form a helical membrane-spanning segment. At 448-456 (HMKEKEKSD) the chain is on the cytoplasmic side.

It belongs to the DDOST 48 kDa subunit family. In terms of assembly, component of the oligosaccharyltransferase (OST) complex. OST exists in two different complex forms which contain common core subunits RPN1, RPN2, OST48, OST4, DAD1 and TMEM258, either STT3A or STT3B as catalytic subunits, and form-specific accessory subunits. STT3A complex assembly occurs through the formation of 3 subcomplexes. Subcomplex 1 contains RPN1 and TMEM258, subcomplex 2 contains the STT3A-specific subunits STT3A, DC2/OSTC, and KCP2 as well as the core subunit OST4, and subcomplex 3 contains RPN2, DAD1, and OST48. The STT3A complex can form stable complexes with the Sec61 complex or with both the Sec61 and TRAP complexes. Interacts with SMIM22.

It localises to the endoplasmic reticulum membrane. The protein operates within protein modification; protein glycosylation. In terms of biological role, subunit of the oligosaccharyl transferase (OST) complex that catalyzes the initial transfer of a defined glycan (Glc(3)Man(9)GlcNAc(2) in eukaryotes) from the lipid carrier dolichol-pyrophosphate to an asparagine residue within an Asn-X-Ser/Thr consensus motif in nascent polypeptide chains, the first step in protein N-glycosylation. N-glycosylation occurs cotranslationally and the complex associates with the Sec61 complex at the channel-forming translocon complex that mediates protein translocation across the endoplasmic reticulum (ER). All subunits are required for a maximal enzyme activity. Required for the assembly of both SST3A- and SS3B-containing OST complexes. This Homo sapiens (Human) protein is Dolichyl-diphosphooligosaccharide--protein glycosyltransferase 48 kDa subunit.